Reading from the N-terminus, the 106-residue chain is uncharacterized protein (106 aa).

3 helical membrane passes run 5-27 (IFVI…GIII), 42-64 (AVAA…LAYM), and 76-98 (LPYI…TNFF).

It localises to the cell membrane. This is an uncharacterized protein from Archaeoglobus fulgidus (strain ATCC 49558 / DSM 4304 / JCM 9628 / NBRC 100126 / VC-16).